Reading from the N-terminus, the 192-residue chain is Imidazole glycerol phosphate synthase subunit HisH (192 aa).

One can recognise a Glutamine amidotransferase type-1 domain in the interval 1–192 (MIVIVDYGLG…QAIQGGFIND (192 aa)). The Nucleophile role is filled by C77. Residues H169 and E171 contribute to the active site.

As to quaternary structure, heterodimer of HisH and HisF.

The protein resides in the cytoplasm. The enzyme catalyses 5-[(5-phospho-1-deoxy-D-ribulos-1-ylimino)methylamino]-1-(5-phospho-beta-D-ribosyl)imidazole-4-carboxamide + L-glutamine = D-erythro-1-(imidazol-4-yl)glycerol 3-phosphate + 5-amino-1-(5-phospho-beta-D-ribosyl)imidazole-4-carboxamide + L-glutamate + H(+). The catalysed reaction is L-glutamine + H2O = L-glutamate + NH4(+). The protein operates within amino-acid biosynthesis; L-histidine biosynthesis; L-histidine from 5-phospho-alpha-D-ribose 1-diphosphate: step 5/9. Its function is as follows. IGPS catalyzes the conversion of PRFAR and glutamine to IGP, AICAR and glutamate. The HisH subunit catalyzes the hydrolysis of glutamine to glutamate and ammonia as part of the synthesis of IGP and AICAR. The resulting ammonia molecule is channeled to the active site of HisF. This Staphylococcus aureus (strain bovine RF122 / ET3-1) protein is Imidazole glycerol phosphate synthase subunit HisH.